Reading from the N-terminus, the 151-residue chain is Histone H2A.2.2 (151 aa).

N-acetylmethionine is present on Met1. Residues 129 to 151 (EKAEKAGTKAKSPKKATKSPKKA) are disordered. A compositionally biased stretch (basic residues) spans 139–151 (KSPKKATKSPKKA). 2 short sequence motifs (SPKK motif) span residues 140–143 (SPKK) and 147–150 (SPKK).

This sequence belongs to the histone H2A family. The nucleosome is a histone octamer containing two molecules each of H2A, H2B, H3 and H4 assembled in one H3-H4 heterotetramer and two H2A-H2B heterodimers. The octamer wraps approximately 147 bp of DNA. Post-translationally, phosphorylated within its C-terminal part, probably at the SPKK motifs.

It is found in the nucleus. The protein resides in the chromosome. Core component of nucleosome. Nucleosomes wrap and compact DNA into chromatin, limiting DNA accessibility to the cellular machineries which require DNA as a template. Histones thereby play a central role in transcription regulation, DNA repair, DNA replication and chromosomal stability. DNA accessibility is regulated via a complex set of post-translational modifications of histones, also called histone code, and nucleosome remodeling. This is Histone H2A.2.2 from Triticum aestivum (Wheat).